The primary structure comprises 397 residues: Heterogeneous nuclear ribonucleoprotein K homolog (397 aa).

Residues 1–41 (MMIKVGAAINGTDSPKAMKREHDNDDGDRTGRHKRPKTDGF) are disordered. Over residues 16–30 (KAMKREHDNDDGDRT) the composition is skewed to basic and acidic residues. KH domains are found at residues 49–111 (KFEV…LKDV) and 124–189 (PCEV…IEEV). Residues 220–279 (GGFPGNMPAGGPPNNRGPAPQRGGQGPPGGPRSYGGAITQGGGQRSFEAGDFQQFRGGPG) are disordered. Positions 224 to 241 (GNMPAGGPPNNRGPAPQR) are enriched in low complexity. One can recognise a KH 3 domain in the interval 316-379 (VTTAQVTIPS…QQIHSAQYLL (64 aa)).

As to quaternary structure, interacts with alg-1; the interaction is direct and may be strengthened through RNA-protein association. As to expression, expressed in gut, muscle, neuronal and hypodermal tissues. Highly expressed in the germline and oocytes.

It localises to the nucleus. It is found in the cytoplasm. Its function is as follows. RNA-binding protein which functions together with alg-1, a component of the miRNA loading complex, to modulate the processing and activity of specific miRNAs such as miR-58 and let-7 to regulate gene expression at the post-transcriptional level during embryonic, hypodermal and neuronal development. Promotes the lsy-6-mediated repression of cog-1 in uterine cells. In embryos, may play a role in the DNA damage response. The sequence is that of Heterogeneous nuclear ribonucleoprotein K homolog from Caenorhabditis elegans.